Here is a 689-residue protein sequence, read N- to C-terminus: Glycine--tRNA ligase beta subunit (689 aa).

Belongs to the class-II aminoacyl-tRNA synthetase family. As to quaternary structure, tetramer of two alpha and two beta subunits.

Its subcellular location is the cytoplasm. It carries out the reaction tRNA(Gly) + glycine + ATP = glycyl-tRNA(Gly) + AMP + diphosphate. This is Glycine--tRNA ligase beta subunit from Photobacterium profundum (strain SS9).